The sequence spans 882 residues: Formin-like protein 9 (882 aa).

An N-terminal signal peptide occupies residues 1-19 (MGMAMRCVLVLFSVSPVLL). The tract at residues 67-92 (SRGRRHKRYSEAPAPAPAPVPAHQAR) is disordered. Residues 138–158 (IVALGVVGLCLVVLGVVIAAF) traverse the membrane as a helical segment. Disordered regions lie at residues 178–202 (RHGSRDQRSPAATRKVSSHPSPDPL), 293–316 (THDSPSDSSYQSLSPDCTSRLSPK), and 401–471 (TMTN…PLPR). Positions 298 to 308 (SDSSYQSLSPD) are enriched in low complexity. Positions 427-441 (KPAPPPPPQKNPPPN) are enriched in pro residues. Residues 462–882 (VGKDGSPLPR…QTLNLVLPLK (421 aa)) form the FH2 domain.

It belongs to the formin-like family. Class-I subfamily.

The protein localises to the membrane. This is Formin-like protein 9 (FH9) from Oryza sativa subsp. japonica (Rice).